Here is a 169-residue protein sequence, read N- to C-terminus: ATP synthase subunit b (169 aa).

A helical membrane pass occupies residues 12–32 (PSVGLIFWKTVAFLIFLYILY). The disordered stretch occupies residues 69–107 (AENEEARREAEQKAQQILREARDSAEELREEEKAKTRRE). A compositionally biased stretch (basic and acidic residues) spans 87 to 107 (REARDSAEELREEEKAKTRRE).

This sequence belongs to the ATPase B chain family. In terms of assembly, F-type ATPases have 2 components, F(1) - the catalytic core - and F(0) - the membrane proton channel. F(1) has five subunits: alpha(3), beta(3), gamma(1), delta(1), epsilon(1). F(0) has three main subunits: a(1), b(2) and c(10-14). The alpha and beta chains form an alternating ring which encloses part of the gamma chain. F(1) is attached to F(0) by a central stalk formed by the gamma and epsilon chains, while a peripheral stalk is formed by the delta and b chains.

The protein localises to the cell inner membrane. Functionally, f(1)F(0) ATP synthase produces ATP from ADP in the presence of a proton or sodium gradient. F-type ATPases consist of two structural domains, F(1) containing the extramembraneous catalytic core and F(0) containing the membrane proton channel, linked together by a central stalk and a peripheral stalk. During catalysis, ATP synthesis in the catalytic domain of F(1) is coupled via a rotary mechanism of the central stalk subunits to proton translocation. In terms of biological role, component of the F(0) channel, it forms part of the peripheral stalk, linking F(1) to F(0). This Salinibacter ruber (strain DSM 13855 / M31) protein is ATP synthase subunit b.